A 91-amino-acid chain; its full sequence is UPF0250 protein Lcho_4239 (91 aa).

The protein belongs to the UPF0250 family.

This chain is UPF0250 protein Lcho_4239, found in Leptothrix cholodnii (strain ATCC 51168 / LMG 8142 / SP-6) (Leptothrix discophora (strain SP-6)).